The sequence spans 427 residues: MESLTLQPIARVDGAINLPGSKSVSNRALLLAALACGKTVLTNLLDSDDVRHMLNALSALGINYTLSADRTRCDITGNGGPLRAPGALELFLGNAGTAMRPLAAALCLGQNEIVLTGEPRMKERPIGHLVDSLRQGGANIDYLEQENYPPLRLRGGFIGGDIEVDGSVSSQFLTALLMTAPLAPKDTIIRVKGELVSKPYIDITLNLMKTFGVEIANHHYQQFVVKGGQQYHSPGRYLVEGDASSASYFLAAGAIKGGTVKVTGIGRKSMQGDIRFADVLEKMGATITWGDDFIACTRGELHAIDMDMNHIPDAAMTIATTALFAKGTTTLRNIYNWRVKETDRLFAMATELRKVGAEVEEGHDYIRITPPAKLQHADIGTYNDHRMAMCFSLVALSDTPVTILDPKCTAKTFPDYFEQLARMSTPA.

Positions 22, 23, and 27 each coordinate 3-phosphoshikimate. Residue Lys-22 coordinates phosphoenolpyruvate. Phosphoenolpyruvate is bound by residues Gly-96 and Arg-124. Residues Ser-169, Ser-170, Gln-171, Ser-197, Asp-313, Asn-336, and Lys-340 each coordinate 3-phosphoshikimate. Gln-171 serves as a coordination point for phosphoenolpyruvate. The active-site Proton acceptor is the Asp-313. Residues Arg-344, Arg-386, and Lys-411 each contribute to the phosphoenolpyruvate site.

The protein belongs to the EPSP synthase family. As to quaternary structure, monomer.

It is found in the cytoplasm. It catalyses the reaction 3-phosphoshikimate + phosphoenolpyruvate = 5-O-(1-carboxyvinyl)-3-phosphoshikimate + phosphate. The protein operates within metabolic intermediate biosynthesis; chorismate biosynthesis; chorismate from D-erythrose 4-phosphate and phosphoenolpyruvate: step 6/7. In terms of biological role, catalyzes the transfer of the enolpyruvyl moiety of phosphoenolpyruvate (PEP) to the 5-hydroxyl of shikimate-3-phosphate (S3P) to produce enolpyruvyl shikimate-3-phosphate and inorganic phosphate. The sequence is that of 3-phosphoshikimate 1-carboxyvinyltransferase from Salmonella dublin (strain CT_02021853).